A 398-amino-acid polypeptide reads, in one-letter code: Putative glutamate--cysteine ligase 2 (398 aa).

The protein belongs to the glutamate--cysteine ligase type 2 family. YbdK subfamily.

It catalyses the reaction L-cysteine + L-glutamate + ATP = gamma-L-glutamyl-L-cysteine + ADP + phosphate + H(+). Functionally, ATP-dependent carboxylate-amine ligase which exhibits weak glutamate--cysteine ligase activity. The protein is Putative glutamate--cysteine ligase 2 of Micrococcus luteus (strain ATCC 4698 / DSM 20030 / JCM 1464 / CCM 169 / CCUG 5858 / IAM 1056 / NBRC 3333 / NCIMB 9278 / NCTC 2665 / VKM Ac-2230) (Micrococcus lysodeikticus).